A 527-amino-acid polypeptide reads, in one-letter code: MPIDKIFKDDASEEKGERARMASFVGAMAISDLVKSTLGPKGMDKILQSTGRGHAVTVTNDGATILKSLHIDNPAAKVLVDISKVQDDEVGDGTTSVVVLAGELLREAEKLVASKIHPMTIIAGYRMASECARNALLKRVIDNKDNAEKFRSDLLKIAMTTLCSKILSQDKEHFAEMAVDAVFRLKGSTNLEAIQIIKKPGGSLKDSFLDEGFILDKKIGIGQPKRIENANILVANTAMDTDKVKIYGARVRVDSMTKVAEIEGAEKEKMKDKVKKIIGHGINCFVNRQLIYNFPEELFADAGILAIEHADFEGIERLGLVTGGEIASTFDNPESVKLGHCKLIEEIMIGEDKLIHFSGCEMGQACSIVLRGASHHVLDEAERSLHDALCVLSQTVNDTRVLLGGGWPEMVMAKEVDELARKTAGKKSHAIEAFSRALVAIPTTIADNAGLDSAELVAQLRAEHHTEGCNAGIDVITGAVGDMEERGIYEAFKVKQAVLLSATEASEMILRVDEIITCAPRRREDRM.

Belongs to the TCP-1 chaperonin family. Heterooligomeric complex of about 850 to 900 kDa that forms two stacked rings, 12 to 16 nm in diameter.

The protein localises to the cytoplasm. Functionally, molecular chaperone; assists the folding of proteins upon ATP hydrolysis. Known to play a role, in vitro, in the folding of actin and tubulin. This chain is T-complex protein 1 subunit beta, found in Arabidopsis thaliana (Mouse-ear cress).